The sequence spans 356 residues: Histidinol-phosphate aminotransferase (356 aa).

Lys-214 is subject to N6-(pyridoxal phosphate)lysine.

It belongs to the class-II pyridoxal-phosphate-dependent aminotransferase family. Histidinol-phosphate aminotransferase subfamily. Homodimer. The cofactor is pyridoxal 5'-phosphate.

It carries out the reaction L-histidinol phosphate + 2-oxoglutarate = 3-(imidazol-4-yl)-2-oxopropyl phosphate + L-glutamate. It functions in the pathway amino-acid biosynthesis; L-histidine biosynthesis; L-histidine from 5-phospho-alpha-D-ribose 1-diphosphate: step 7/9. This Aromatoleum aromaticum (strain DSM 19018 / LMG 30748 / EbN1) (Azoarcus sp. (strain EbN1)) protein is Histidinol-phosphate aminotransferase.